Consider the following 302-residue polypeptide: Nucleotide-binding protein RHOS4_02640 (302 aa).

15–22 is a binding site for ATP; it reads GPSGAGRT. A GTP-binding site is contributed by 62 to 65; sequence DVRN.

It belongs to the RapZ-like family.

Functionally, displays ATPase and GTPase activities. This Cereibacter sphaeroides (strain ATCC 17023 / DSM 158 / JCM 6121 / CCUG 31486 / LMG 2827 / NBRC 12203 / NCIMB 8253 / ATH 2.4.1.) (Rhodobacter sphaeroides) protein is Nucleotide-binding protein RHOS4_02640.